Reading from the N-terminus, the 778-residue chain is Dolichyl-phosphate-mannose--protein mannosyltransferase 4 (778 aa).

Positions 1 to 28 (MASKSEKAVKKAQKLSKEPSVELTDTKS) are enriched in basic and acidic residues. The disordered stretch occupies residues 1 to 44 (MASKSEKAVKKAQKLSKEPSVELTDTKSSDNVTPKQKSPNSTEE). The span at 29 to 41 (SDNVTPKQKSPNS) shows a compositional bias: polar residues. N-linked (GlcNAc...) asparagine glycosylation occurs at asparagine 40. 7 consecutive transmembrane segments (helical) span residues 60-80 (LAFVLITVLSFITRFWNLNLP), 103-123 (FFDLHPPFAKLLLALVAKLAG), 145-165 (VTIRAWPALLSSLVPPVVFLI), 196-216 (ILLDATLLFSMVCAIYCYVRF), 223-243 (PFSRPWWAWLFFTGFFLSCTI), 248-268 (VGFFTFLSIGLSVCLELWYLW), and 288-308 (FCLIFFPFLFFLFWFYMHFNI). The N-linked (GlcNAc...) asparagine glycan is linked to asparagine 335. MIR domains lie at 336–396 (STIL…ILPA), 408–467 (NVPV…VVMS), and 474–529 (RPLY…FDDI). A run of 4 helical transmembrane segments spans residues 608-628 (WWIIAGTVLSTTVVAAAEILL), 644-664 (FYRSTMFFYMTYVFHYLPFFI), 669-689 (LFLHHYLPAHLAGSLLVGAFI), and 726-746 (VIELICTLLLIFVVIYCFTFF).

Belongs to the glycosyltransferase 39 family.

It is found in the endoplasmic reticulum membrane. It catalyses the reaction a di-trans,poly-cis-dolichyl beta-D-mannosyl phosphate + L-seryl-[protein] = 3-O-(alpha-D-mannosyl)-L-seryl-[protein] + a di-trans,poly-cis-dolichyl phosphate + H(+). The enzyme catalyses a di-trans,poly-cis-dolichyl beta-D-mannosyl phosphate + L-threonyl-[protein] = 3-O-(alpha-D-mannosyl)-L-threonyl-[protein] + a di-trans,poly-cis-dolichyl phosphate + H(+). The protein operates within protein modification; protein glycosylation. Its function is as follows. Transfers mannose from Dol-P-mannose to Ser or Thr residues on proteins. Required for normal cell wall and septum formation. The protein is Dolichyl-phosphate-mannose--protein mannosyltransferase 4 (ogm4) of Schizosaccharomyces pombe (strain 972 / ATCC 24843) (Fission yeast).